Consider the following 241-residue polypeptide: Folate receptor alpha (241 aa).

Residues 1–19 (MAWQMTQLLLLALVAAAWG) form the signal peptide. Cystine bridges form between Cys-36/Cys-64, Cys-56/Cys-104, Cys-65/Cys-108, Cys-88/Cys-174, Cys-95/Cys-145, Cys-134/Cys-208, Cys-138/Cys-188, and Cys-151/Cys-168. An N-linked (GlcNAc...) asparagine glycan is attached at Asn-68. Residues Asp-102, Tyr-106, 123 to 127 (WRKER), 156 to 161 (HKGWNW), and Ser-195 each bind folate. N-linked (GlcNAc...) asparagine glycosylation is present at Asn-160. Ser-234 carries GPI-anchor amidated serine lipidation. The propeptide at 235–241 (GSTPQGI) is removed in mature form.

The protein belongs to the folate receptor family. In terms of processing, the secreted form is derived from the membrane-bound form either by cleavage of the GPI anchor, or/and by proteolysis catalyzed by a metalloprotease. Detected in milk (at protein level).

It localises to the cell membrane. The protein resides in the apical cell membrane. It is found in the basolateral cell membrane. Its subcellular location is the secreted. The protein localises to the cytoplasmic vesicle. It localises to the clathrin-coated vesicle. The protein resides in the endosome. Binds to folate and reduced folic acid derivatives and mediates delivery of 5-methyltetrahydrofolate and folate analogs into the interior of cells. Has high affinity for folate and folic acid analogs at neutral pH. Exposure to slightly acidic pH after receptor endocytosis triggers a conformation change that strongly reduces its affinity for folates and mediates their release. Required for normal embryonic development and normal cell proliferation. The sequence is that of Folate receptor alpha (FOLR1) from Bos taurus (Bovine).